Here is a 535-residue protein sequence, read N- to C-terminus: Proto-oncogene tyrosine-protein kinase Src (535 aa).

The segment at 1–56 is disordered; the sequence is MGSNKSKPKDASQRRRSLEPSENVHGAGGAFPASQTPSKPASADGHRGPSAAFVPP. Residue G2 is the site of N-myristoyl glycine attachment. Over residues 7 to 19 the composition is skewed to basic and acidic residues; that stretch reads KPKDASQRRRSLE. Residues S17, S21, and S74 each carry the phosphoserine modification. The region spanning 83 to 144 is the SH3 domain; that stretch reads GGVTTFVALY…PSNYVAPSDS (62 aa). Residues 150-247 form the SH2 domain; that stretch reads WYFGKITRRE…GLCHRLTTVC (98 aa). Phosphotyrosine is present on Y186. Residues 269-522 enclose the Protein kinase domain; it reads LRLEVKLGQG…YLQAFLEDYF (254 aa). ATP contacts are provided by residues 275 to 283 and K297; that span reads LGQGCFGEV. Catalysis depends on D388, which acts as the Proton acceptor. A Phosphotyrosine; by autocatalysis modification is found at Y418. Y418 is modified (phosphotyrosine; by FAK2). Residue Y529 is modified to Phosphotyrosine; by CSK.

It belongs to the protein kinase superfamily. Tyr protein kinase family. SRC subfamily. Part of a complex comprised of PTPRA, BCAR1, BCAR3 (via SH2 domain) and SRC; the formation of the complex is dependent on integrin mediated-tyrosine phosphorylation of PTPRA. Interacts with CDCP1, TGFB1I1 and TOM1L2. Interacts with DDEF1/ASAP1 via its SH3 domain. Interacts with CCPG1. Interacts with the cytoplasmic domain of MUC1, phosphorylates it and increases binding of MUC1 with beta-catenin. Interacts with RALGPS1 via its SH3 domain. Interacts with CAV2 (tyrosine phosphorylated form). Interacts (via the SH3 domain and the protein kinase domain) with ARRB1; the interaction is independent of the phosphorylation state of SRC C-terminus. Interacts with FCAMR and PXN. Interacts with ARRB2. Interacts with ARRB1. Interacts with SRCIN1. Interacts with NDFIP2 and more weakly with NDFIP1. Interacts with PIK3CA and/or PIK3C2B, PTK2/FAK1, ESR1 (dimethylated on arginine) and FAK. Interacts (via SH2 and SH3 domain) with TNK2. Interacts (via protein kinase domain) with the tyrosine phosphorylated form of RUNX3 (via runt domain). Interacts with TRAF3 (via RING-type zinc finger domain). Interacts with RIGI, MAVS and TBK1. Interacts (via SH2 domain) with RACK1; the interaction is enhanced by tyrosine phosphorylation of RACK1 and inhibits SRC activity. Interacts (via SH2 domain) with the 'Tyr-402' phosphorylated form of PTK2B/PYK2. Interacts (via SH2 domain) with FLT3 (tyrosine phosphorylated). Identified in a complex containing FGFR4, NCAM1, CDH2, PLCG1, FRS2, SRC, SHC1, GAP43 and CTTN. Interacts with EPHB1; activates the MAPK/ERK cascade to regulate cell migration. Interacts with ERBB2 and STAT1. Interacts with PDGFRA (tyrosine phosphorylated). Interacts with CSF1R. Interacts (via SH2 domain) with the 'Tyr-9' phosphorylated form of PDPK1. Interacts with DDR2. Interacts with AMOTL2; this interaction regulates the translocation of phosphorylated SRC to peripheral cell-matrix adhesion sites. Interacts with DDR1 and DAB2. Interacts with TRAP1. Interacts with CBLC; the interaction is enhanced when SRC is phosphorylated at 'Tyr-424'. Interacts with ARHGEF5. Interacts (via cytoplasmic domain) with CEACAM1 (via SH2 domain); this interaction is regulated by trans-homophilic cell adhesion. Interacts with MPP2. Interacts with PRR7. Interacts (via kinase domain and to a lesser extent the SH2 domain) directly with PDLIM4; this interaction results in PTPN13-mediated dephosphorylation of this protein leading to its inactivation. Interacts with P85 (PIK3R1 or PIK3R2). Interacts with HNRNPA2B1. Interacts with IL6ST/gp130. Interacts (via SH3 domain) with PELP1 in the presence of 17-beta-estradiol. Interacts with AMBRA1. Post-translationally, myristoylated at Gly-2, and this is essential for targeting to membranes. In terms of processing, dephosphorylated at Tyr-529 by PTPRJ. Phosphorylated on Tyr-529 by c-Src kinase (CSK). The phosphorylated form is termed pp60c-src. Dephosphorylated by PTPRJ at Tyr-418. Normally maintained in an inactive conformation with the SH2 domain engaged with Tyr-529, the SH3 domain engaged with the SH2-kinase linker, and Tyr-418 dephosphorylated. Dephosphorylation of Tyr-529 as a result of protein tyrosine phosphatase (PTP) action disrupts the intramolecular interaction between the SH2 domain and Tyr-529, Tyr-418 can then become autophosphorylated, resulting in SRC activation. Phosphorylation of Tyr-529 by CSK allows this interaction to reform, resulting in SRC inactivation. CDK5-mediated phosphorylation at Ser-74 targets SRC to ubiquitin-dependent degradation and thus leads to cytoskeletal reorganization. Phosphorylated by PTK2/FAK1; this enhances kinase activity. Phosphorylated by PTK2B/PYK2; this enhances kinase activity. Upon activation of IL6ST by IL6, Tyr-418 is phosphorylated and Tyr-529 dephosphorylated. Displays reduced levels of autophosphorylation at Tyr-418 compared to isoform 2. Post-translationally, displays enhanced levels of autophosphorylation at Tyr-418 compared to isoform 1. In terms of processing, S-nitrosylation is important for activation of its kinase activity. Ubiquitinated in response to CDK5-mediated phosphorylation. Ubiquitination mediated by CBLC requires SRC autophosphorylation at Tyr-418 and may lead to lysosomal degradation.

It is found in the cell membrane. Its subcellular location is the mitochondrion inner membrane. It localises to the nucleus. The protein localises to the cytoplasm. The protein resides in the cytoskeleton. It is found in the perinuclear region. Its subcellular location is the cell junction. It localises to the focal adhesion. The catalysed reaction is L-tyrosyl-[protein] + ATP = O-phospho-L-tyrosyl-[protein] + ADP + H(+). Its activity is regulated as follows. Phosphorylation by CSK at Tyr-529 inhibits kinase activity. Inhibitory phosphorylation at Tyr-529 is enhanced by heme. Further phosphorylation by CDK1 partially reactivates CSK-inactivated SRC and facilitates complete reactivation by protein tyrosine phosphatase PTPRC. Integrin engagement stimulates kinase activity. Phosphorylation by PTK2/FAK1 enhances kinase activity. Butein and pseudosubstrate-based peptide inhibitors like CIYKYYF act as inhibitors. Phosphorylation at Tyr-418 increases kinase activity. Non-receptor protein tyrosine kinase which is activated following engagement of many different classes of cellular receptors including immune response receptors, integrins and other adhesion receptors, receptor protein tyrosine kinases, G protein-coupled receptors as well as cytokine receptors. Participates in signaling pathways that control a diverse spectrum of biological activities including gene transcription, immune response, cell adhesion, cell cycle progression, apoptosis, migration, and transformation. Due to functional redundancy between members of the SRC kinase family, identification of the specific role of each SRC kinase is very difficult. SRC appears to be one of the primary kinases activated following engagement of receptors and plays a role in the activation of other protein tyrosine kinase (PTK) families. Receptor clustering or dimerization leads to recruitment of SRC to the receptor complexes where it phosphorylates the tyrosine residues within the receptor cytoplasmic domains. Plays an important role in the regulation of cytoskeletal organization through phosphorylation of specific substrates such as AFAP1. Phosphorylation of AFAP1 allows the SRC SH2 domain to bind AFAP1 and to localize to actin filaments. Cytoskeletal reorganization is also controlled through the phosphorylation of cortactin (CTTN). When cells adhere via focal adhesions to the extracellular matrix, signals are transmitted by integrins into the cell resulting in tyrosine phosphorylation of a number of focal adhesion proteins, including PTK2/FAK1 and paxillin (PXN). In addition to phosphorylating focal adhesion proteins, SRC is also active at the sites of cell-cell contact adherens junctions and phosphorylates substrates such as beta-catenin (CTNNB1), delta-catenin (CTNND1), and plakoglobin (JUP). Another type of cell-cell junction, the gap junction, is also a target for SRC, which phosphorylates connexin-43 (GJA1). SRC is implicated in regulation of pre-mRNA-processing and phosphorylates RNA-binding proteins such as KHDRBS1. Phosphorylates PKP3 at 'Tyr-195' in response to reactive oxygen species, which may cause the release of PKP3 from desmosome cell junctions into the cytoplasm. Also plays a role in PDGF-mediated tyrosine phosphorylation of both STAT1 and STAT3, leading to increased DNA binding activity of these transcription factors. Involved in the RAS pathway through phosphorylation of RASA1 and RASGRF1. Plays a role in EGF-mediated calcium-activated chloride channel activation. Required for epidermal growth factor receptor (EGFR) internalization through phosphorylation of clathrin heavy chain (CLTC and CLTCL1) at 'Tyr-1477'. Involved in beta-arrestin (ARRB1 and ARRB2) desensitization through phosphorylation and activation of GRK2, leading to beta-arrestin phosphorylation and internalization. Has a critical role in the stimulation of the CDK20/MAPK3 mitogen-activated protein kinase cascade by epidermal growth factor. Might be involved not only in mediating the transduction of mitogenic signals at the level of the plasma membrane but also in controlling progression through the cell cycle via interaction with regulatory proteins in the nucleus. Plays an important role in osteoclastic bone resorption in conjunction with PTK2B/PYK2. Both the formation of a SRC-PTK2B/PYK2 complex and SRC kinase activity are necessary for this function. Recruited to activated integrins by PTK2B/PYK2, thereby phosphorylating CBL, which in turn induces the activation and recruitment of phosphatidylinositol 3-kinase to the cell membrane in a signaling pathway that is critical for osteoclast function. Promotes energy production in osteoclasts by activating mitochondrial cytochrome C oxidase. Phosphorylates DDR2 on tyrosine residues, thereby promoting its subsequent autophosphorylation. Phosphorylates RUNX3 and COX2 on tyrosine residues, TNK2 on 'Tyr-284' and CBL on 'Tyr-738'. Enhances RIGI-elicited antiviral signaling. Phosphorylates PDPK1 at 'Tyr-9', 'Tyr-373' and 'Tyr-376'. Phosphorylates BCAR1 at 'Tyr-226'. Phosphorylates CBLC at multiple tyrosine residues, phosphorylation at 'Tyr-341' activates CBLC E3 activity. Phosphorylates synaptic vesicle protein synaptophysin (SYP). Involved in anchorage-independent cell growth. Required for podosome formation. Mediates IL6 signaling by activating YAP1-NOTCH pathway to induce inflammation-induced epithelial regeneration. Phosphorylates OTUB1, promoting deubiquitination of RPTOR. Its function is as follows. Non-receptor protein tyrosine kinase which phosphorylates synaptophysin with high affinity. Functionally, non-receptor protein tyrosine kinase which shows higher basal kinase activity than isoform 1, possibly due to weakened intramolecular interactions which enhance autophosphorylation of Tyr-418 and subsequent activation. The SH3 domain shows reduced affinity with the linker sequence between the SH2 and kinase domains which may account for the increased basal activity. Displays altered substrate specificity compared to isoform 1, showing weak affinity for synaptophysin and for peptide substrates containing class I or class II SH3 domain-binding motifs. Plays a role in L1CAM-mediated neurite elongation, possibly by acting downstream of L1CAM to drive cytoskeletal rearrangements involved in neurite outgrowth. This is Proto-oncogene tyrosine-protein kinase Src from Mus musculus (Mouse).